A 288-amino-acid polypeptide reads, in one-letter code: Extracellular ribonuclease (288 aa).

The first 26 residues, 1 to 26, serve as a signal peptide directing secretion; it reads MTKKAWFLPLVCVLLISGWLAPAASA.

It localises to the secreted. Its function is as follows. Mg(2+)-activated ribonuclease which hydrolyzes RNA apparently nonspecifically into oligonucleotides with 5'-terminal phosphate. This is Extracellular ribonuclease (bsn) from Bacillus subtilis (strain 168).